Consider the following 154-residue polypeptide: MSIEKEKFWASHKQVVKEIGGTNLINGKHDLFKAVAYTSDDIEAVESQFGVPIMGLQFHPEMSMYSNAFTCSEKGRDKKIYLSFQQSVWSFHNKQVLLAEFKNSKHYSKTQHPTEDITEKLINYENNKYNNNIIDIFNETSVEIIGYSNVEILN.

The region spanning 1–94 is the Glutamine amidotransferase type-1 domain; the sequence is MSIEKEKFWA…QQSVWSFHNK (94 aa).

The chain is Putative glutamine amidotransferase-like protein RP712 from Rickettsia prowazekii (strain Madrid E).